An 84-amino-acid chain; its full sequence is MKLTCMVIVAVLFLTAWTSVMADGSINRPDIAEGWQKFFSKARDEMKNRAASELNKRCAGIGSFCGLPGLVDCCSGRCFIVCLP.

The first 22 residues, 1-22, serve as a signal peptide directing secretion; the sequence is MKLTCMVIVAVLFLTAWTSVMA. Residues 23-57 constitute a propeptide that is removed on maturation; sequence DGSINRPDIAEGWQKFFSKARDEMKNRAASELNKR. 3 disulfides stabilise this stretch: Cys58-Cys74, Cys65-Cys78, and Cys73-Cys82.

This sequence belongs to the conotoxin O1 superfamily. As to expression, expressed by the venom duct.

The protein localises to the secreted. Functionally, this toxin activates voltage-gated sodium channels. It shifts the voltage-dependence of activation to more hyperpolarized potentials but has only little effect on channel inactivation. It is active on Nav1.3/SCN3A (EC(50)=3.98 nM), Nav1.4/SCN4A (EC(50)=4.99 nM), Nav1.6/SCN8A (EC(50)=1.27 nM) and Nav1.7/SCN9A (EC(50)=2.42 nM) voltage-gated sodium channels. In vivo, it induces nocifensive or pain-like behaviors in mice when injected intraplantarly. The chain is Delta-conotoxin-like Bt6.4 from Conus betulinus (Beech cone).